The sequence spans 319 residues: Replication factor C small subunit (319 aa).

45–52 is a binding site for ATP; it reads GPPGTGKT.

It belongs to the activator 1 small subunits family. RfcS subfamily. In terms of assembly, heteropentamer composed of four small subunits (RfcS) and one large subunit (RfcL). Both subunits interact with PCNA.

Part of the RFC clamp loader complex which loads the PCNA sliding clamp onto DNA. The complex possesses DNA-dependent ATPase activity which is further stimulated by PCNA. This Archaeoglobus fulgidus (strain ATCC 49558 / DSM 4304 / JCM 9628 / NBRC 100126 / VC-16) protein is Replication factor C small subunit (rfcS).